Consider the following 496-residue polypeptide: 2,3-bisphosphoglycerate-independent phosphoglycerate mutase (496 aa).

Mn(2+)-binding residues include Asp12 and Ser62. Ser62 acts as the Phosphoserine intermediate in catalysis. Residues His121, 150-151 (RD), Arg181, Arg187, 252-255 (RNDR), and Lys317 each bind substrate. Positions 384, 388, 425, 426, and 444 each coordinate Mn(2+).

It belongs to the BPG-independent phosphoglycerate mutase family. Monomer. It depends on Mn(2+) as a cofactor.

It carries out the reaction (2R)-2-phosphoglycerate = (2R)-3-phosphoglycerate. Its pathway is carbohydrate degradation; glycolysis; pyruvate from D-glyceraldehyde 3-phosphate: step 3/5. In terms of biological role, catalyzes the interconversion of 2-phosphoglycerate and 3-phosphoglycerate. This chain is 2,3-bisphosphoglycerate-independent phosphoglycerate mutase, found in Anaplasma phagocytophilum (strain HZ).